The sequence spans 243 residues: Small ribosomal subunit protein uS3 (243 aa).

At A2 the chain carries N-acetylalanine. S6 carries the post-translational modification Phosphoserine; by PKC/PRKCD. The KH type-2 domain maps to 21–92; that stretch reads LNEFLTRELA…SVELYAEKVA (72 aa). The residue at position 35 (S35) is a Phosphoserine. T42 bears the Phosphothreonine; by MAPK mark. K62 carries the post-translational modification N6-acetyllysine. An asymmetric dimethylarginine; by PRMT1 mark is found at R64, R65, and R67. T70 is modified (phosphothreonine; by PKB). K90 is covalently cross-linked (Glycyl lysine isopeptide (Lys-Gly) (interchain with G-Cter in ubiquitin)). Residue S104 is modified to Phosphoserine. K132 carries the N6-succinyllysine modification. K202 is covalently cross-linked (Glycyl lysine isopeptide (Lys-Gly) (interchain with G-Cter in ubiquitin)). S209 is modified (phosphoserine; by IKKB). A Glycyl lysine isopeptide (Lys-Gly) (interchain with G-Cter in SUMO2); alternate cross-link involves residue K214. A Glycyl lysine isopeptide (Lys-Gly) (interchain with G-Cter in ubiquitin); alternate cross-link involves residue K214. The disordered stretch occupies residues 214 to 243; it reads KDEILPTTPISEQKGGKPEPPAMPQPVPTA. The residue at position 220 (T220) is a Phosphothreonine. T221 bears the Phosphothreonine; by CDK1 and PKC/PRKCD mark. Phosphoserine is present on S224. K230 is covalently cross-linked (Glycyl lysine isopeptide (Lys-Gly) (interchain with G-Cter in SUMO2)). The span at 231-243 shows a compositional bias: pro residues; the sequence is PEPPAMPQPVPTA. T242 is subject to Phosphothreonine.

It belongs to the universal ribosomal protein uS3 family. As to quaternary structure, component of the 40S small ribosomal subunit. Identified in a IGF2BP1-dependent mRNP granule complex containing untranslated mRNAs. Interacts with HNRPD. Interacts with PRMT1; the interaction methylates RPS3. Interacts with SUMO1; the interaction sumoylates RPS3. Interacts with UBC9. Interacts with CDK1; the interaction phosphorylates RPS3. Interacts with PRKCD; the interaction phosphorylates RPS3. Interacts with PKB/AKT; the interaction phosphorylates RPS3. Interacts with E2F1; the interaction occurs in the absence of nerve growth factor and increases transcription of pro-apoptotic proteins BCL2L11/BIM and HRK/Dp5. Interacts with the base excision repair proteins APEX1 and OGG1; interaction with OGG1 increases OGG1 N-glycosylase activity. Interacts with UNG; the interaction increases the uracil excision activity of UNG1. Interacts with HSP90; the interaction prevents the ubiquitination and proteasome-dependent degradation of RPS3 and is suppressed by increased ROS levels. Interacts with TOM70; the interaction promotes translocation of RPS3 to the mitochondrion. Interacts (via N-terminus) with RELA (via N-terminus); the interaction enhances the DNA-binding activity of the NF-kappa-B p65-p50 complex. Interacts with NFKBIA; the interaction is direct and may bridge the interaction between RPS3 and RELA. Interacts with IKKB; the interaction phosphorylates RPS3 and enhances its translocation to the nucleus. Interacts (via KH domain) with MDM2 and TP53. Interacts with TRADD. Interacts with CRY1. Methylation by PRMT1 is required for import into the nucleolus and for ribosome assembly. In terms of processing, sumoylation by SUMO1 enhances protein stability through increased resistance to proteolysis. Sumoylation occurs at one or more of the three consensus sites, Lys-18, Lys-214 and Lys-230. Post-translationally, phosphorylation at Thr-221 by CDK1 occurs mainly in G2/M phase. Phosphorylation by PRKCD occurs on a non-ribosomal-associated form which results in translocation of RPS3 to the nucleus and enhances its endonuclease activity. Phosphorylated on Ser-209 by IKKB in response to activation of the NF-kappa-B p65-p50 complex which enhances the association of RPS3 with importin-alpha and mediates the nuclear translocation of RPS3. Phosphorylation by MAPK is required for translocation to the nucleus following exposure of cells to DNA damaging agents such as hydrogen peroxide. Phosphorylation by PKB/AKT mediates RPS3 nuclear translocation, enhances RPS3 endonuclease activity and suppresses RPS3-induced neuronal apoptosis. Ubiquitinated; ubiquitination is prevented by interaction with HSP90 which stabilizes the protein. Monoubiquitinated at Lys-214 by RNF10 and ZNF598 when a ribosome has stalled during translation of poly(A) sequences, leading to preclude synthesis of a long poly-lysine tail and initiate the ribosome quality control (RQC) pathway to degrade the potentially detrimental aberrant nascent polypeptide. Deubiquitinated at Lys-214 by USP10, preventing degradation by the proteasome and promoting 40S ribosome subunit recycling following ribosome dissociation. In terms of processing, ufmylated by UFL1.

Its subcellular location is the cytoplasm. The protein resides in the nucleus. It is found in the nucleolus. The protein localises to the mitochondrion inner membrane. It localises to the cytoskeleton. Its subcellular location is the spindle. It carries out the reaction 2'-deoxyribonucleotide-(2'-deoxyribose 5'-phosphate)-2'-deoxyribonucleotide-DNA = a 3'-end 2'-deoxyribonucleotide-(2,3-dehydro-2,3-deoxyribose 5'-phosphate)-DNA + a 5'-end 5'-phospho-2'-deoxyribonucleoside-DNA + H(+). Component of the small ribosomal subunit. The ribosome is a large ribonucleoprotein complex responsible for the synthesis of proteins in the cell. Has endonuclease activity and plays a role in repair of damaged DNA. Cleaves phosphodiester bonds of DNAs containing altered bases with broad specificity and cleaves supercoiled DNA more efficiently than relaxed DNA. Displays high binding affinity for 7,8-dihydro-8-oxoguanine (8-oxoG), a common DNA lesion caused by reactive oxygen species (ROS). Has also been shown to bind with similar affinity to intact and damaged DNA. Stimulates the N-glycosylase activity of the base excision protein OGG1. Enhances the uracil excision activity of UNG1. Also stimulates the cleavage of the phosphodiester backbone by APEX1. When located in the mitochondrion, reduces cellular ROS levels and mitochondrial DNA damage. Has also been shown to negatively regulate DNA repair in cells exposed to hydrogen peroxide. Plays a role in regulating transcription as part of the NF-kappa-B p65-p50 complex where it binds to the RELA/p65 subunit, enhances binding of the complex to DNA and promotes transcription of target genes. Represses its own translation by binding to its cognate mRNA. Binds to and protects TP53/p53 from MDM2-mediated ubiquitination. Involved in spindle formation and chromosome movement during mitosis by regulating microtubule polymerization. Involved in induction of apoptosis through its role in activation of CASP8. Induces neuronal apoptosis by interacting with the E2F1 transcription factor and acting synergistically with it to up-regulate pro-apoptotic proteins BCL2L11/BIM and HRK/Dp5. Interacts with TRADD following exposure to UV radiation and induces apoptosis by caspase-dependent JNK activation. The sequence is that of Small ribosomal subunit protein uS3 (RPS3) from Bos taurus (Bovine).